A 141-amino-acid polypeptide reads, in one-letter code: Large ribosomal subunit protein uL11 (141 aa).

It belongs to the universal ribosomal protein uL11 family. In terms of assembly, part of the ribosomal stalk of the 50S ribosomal subunit. Interacts with L10 and the large rRNA to form the base of the stalk. L10 forms an elongated spine to which L12 dimers bind in a sequential fashion forming a multimeric L10(L12)X complex. One or more lysine residues are methylated.

Functionally, forms part of the ribosomal stalk which helps the ribosome interact with GTP-bound translation factors. The chain is Large ribosomal subunit protein uL11 from Fervidobacterium nodosum (strain ATCC 35602 / DSM 5306 / Rt17-B1).